Reading from the N-terminus, the 78-residue chain is Large ribosomal subunit protein bL31 (78 aa).

Belongs to the bacterial ribosomal protein bL31 family. Type A subfamily. In terms of assembly, part of the 50S ribosomal subunit.

In terms of biological role, binds the 23S rRNA. This is Large ribosomal subunit protein bL31 (rpmE) from Rickettsia felis (strain ATCC VR-1525 / URRWXCal2) (Rickettsia azadi).